Consider the following 879-residue polypeptide: Oxysterol-binding protein-related protein 5 (879 aa).

Residues 1-73 (MKEEAFLRRR…TPSSATKVPP (73 aa)) form a disordered region. Residue S12 is modified to Phosphoserine. Positions 93–123 (VTKKETLKAQKENYRQEKKRATRQLLSALTD) form a coiled coil. One can recognise a PH domain in the interval 126–243 (VVIMADSLKI…WLDALELALR (118 aa)). Positions 254-341 (KPGRDGEPGT…TPGAPVRRGT (88 aa)) are disordered. Basic and acidic residues-rich tracts occupy residues 300 to 309 (FSDKSERENP) and 316 to 325 (TQDHSRKTES). Residues 384 to 389 (LSRVVL), 446 to 449 (KPYN), and 478 to 479 (HH) contribute to the a 1,2-diacyl-sn-glycero-3-phospho-(1D-myo-inositol 4-phosphate) site. A 1,2-diacyl-sn-glycero-3-phospho-L-serine-binding positions include 384 to 389 (LSRVVL) and N449. An a 1,2-diacyl-sn-glycero-3-phospho-L-serine-binding site is contributed by S504. Residues K670, E674, and R678 each coordinate a 1,2-diacyl-sn-glycero-3-phospho-(1D-myo-inositol 4-phosphate). The disordered stretch occupies residues 742–806 (TTFLGSPGPR…FVPGGESPCP (65 aa)). S747 is subject to Phosphoserine. Residues 750-765 (PRHERSGPDQRLRKAS) show a composition bias toward basic and acidic residues. The span at 766 to 783 (DQPSGHSQATESSGSTPE) shows a compositional bias: polar residues. A helical membrane pass occupies residues 860-878 (SWFLLCVFLACQLFINHIL).

Belongs to the OSBP family. In terms of tissue distribution, ubiquitously expressed.

Its subcellular location is the endoplasmic reticulum membrane. Lipid transporter involved in lipid countertransport between the endoplasmic reticulum and the plasma membrane: specifically exchanges phosphatidylserine with phosphatidylinositol 4-phosphate (PI4P), delivering phosphatidylserine to the plasma membrane in exchange for PI4P, which is degraded by the SAC1/SACM1L phosphatase in the endoplasmic reticulum. Binds phosphatidylserine and PI4P in a mutually exclusive manner. May cooperate with NPC1 to mediate the exit of cholesterol from endosomes/lysosomes. Binds 25-hydroxycholesterol and cholesterol. The protein is Oxysterol-binding protein-related protein 5 (OSBPL5) of Homo sapiens (Human).